The chain runs to 20 residues: Hongotoxin-5 (20 aa).

The protein belongs to the short scorpion toxin superfamily. Potassium channel inhibitor family. Alpha-KTx 02 subfamily. As to expression, expressed by the venom gland.

Its subcellular location is the secreted. Functionally, potent selective inhibitor of Kv1/KCNA voltage-gated potassium channels. This chain is Hongotoxin-5, found in Centruroides limbatus (Bark scorpion).